Consider the following 326-residue polypeptide: Vitamin B12 import system permease protein BtuC (326 aa).

9 helical membrane passes run 19 to 39 (LSVL…LWIL), 61 to 81 (LAVL…QALF), 88 to 108 (PGLL…VLLG), 112 to 132 (LPNW…TLIL), 146 to 166 (LLAG…AIYF), 184 to 204 (GGVD…LLWI), 240 to 260 (GWMV…GLVI), 274 to 294 (VLLP…DIVA), and 302 to 322 (ELPI…WLLL).

The protein belongs to the binding-protein-dependent transport system permease family. FecCD subfamily. The complex is composed of two ATP-binding proteins (BtuD), two transmembrane proteins (BtuC) and a solute-binding protein (BtuF).

The protein localises to the cell inner membrane. Functionally, part of the ABC transporter complex BtuCDF involved in vitamin B12 import. Involved in the translocation of the substrate across the membrane. The polypeptide is Vitamin B12 import system permease protein BtuC (Escherichia coli O6:K15:H31 (strain 536 / UPEC)).